A 619-amino-acid chain; its full sequence is Nucleolar GTP-binding protein 2 (619 aa).

The span at 1–10 (MGTGKKEKSR) shows a compositional bias: basic and acidic residues. Residues 1 to 24 (MGTGKKEKSRIQRQGKVTGDPKVK) form a disordered region. Positions 222-383 (WNELYKVIDS…LIDCPGIVPP (162 aa)) constitute a CP-type G domain. GTP-binding positions include 332 to 339 (GYPNVGKS) and 376 to 380 (DCPGI). Residues 473–619 (PWFTPAPEKE…PPKKQRRSRK (147 aa)) form a disordered region. Over residues 489–500 (MEGREGRYGEMS) the composition is skewed to basic and acidic residues. A compositionally biased stretch (acidic residues) spans 536–546 (SDSDSEVEEAA). Positions 547-556 (EEKGEEKSTA) are enriched in basic and acidic residues. Positions 565 to 603 (SSDEEEDGEEEGSDVEDDEEGSDLDIEGASELEESESEA) are enriched in acidic residues.

The protein belongs to the TRAFAC class YlqF/YawG GTPase family. NOG2 subfamily.

It is found in the nucleus. It localises to the nucleolus. Its function is as follows. GTPase that associates with pre-60S ribosomal subunits in the nucleolus and is required for their nuclear export and maturation. The polypeptide is Nucleolar GTP-binding protein 2 (nog-2) (Neurospora crassa (strain ATCC 24698 / 74-OR23-1A / CBS 708.71 / DSM 1257 / FGSC 987)).